The chain runs to 349 residues: Nuclear distribution protein nudE homolog 1-B (349 aa).

Residues 22 to 189 (VAMKYKQCSE…ELAVQQKQEK (168 aa)) adopt a coiled-coil conformation.

It belongs to the nudE family. In terms of assembly, self-associates. Interacts with pafah1b1. Phosphorylated in mitosis.

The protein localises to the cytoplasm. Its subcellular location is the cytoskeleton. The protein resides in the microtubule organizing center. It is found in the centrosome. It localises to the spindle. The protein localises to the chromosome. Its subcellular location is the centromere. The protein resides in the kinetochore. It is found in the cleavage furrow. It localises to the cytoplasmic vesicle membrane. Functionally, required for centrosome duplication and formation and function of the mitotic spindle. The chain is Nuclear distribution protein nudE homolog 1-B (nde1-b) from Xenopus laevis (African clawed frog).